Here is an 83-residue protein sequence, read N- to C-terminus: Transmembrane protein EP84R (83 aa).

The next 2 helical transmembrane spans lie at Ile-31–Leu-51 and Thr-59–Tyr-79.

The protein belongs to the asfivirus EP84R family.

The protein resides in the virion membrane. This Ornithodoros (relapsing fever ticks) protein is Transmembrane protein EP84R.